The primary structure comprises 317 residues: Protoheme IX farnesyltransferase (317 aa).

9 consecutive transmembrane segments (helical) span residues 36–56, 57–77, 108–128, 129–149, 157–177, 184–204, 230–247, 251–273, and 284–304; these read VMVL…ATVN, PVIA…SGCL, LAFG…ASNW, LAAG…SMWL, IVIG…AVTG, LVLF…LALV, IIWY…PVWL, GWLY…VQVY, and AAMG…SALL.

It belongs to the UbiA prenyltransferase family. Protoheme IX farnesyltransferase subfamily.

The protein localises to the cell inner membrane. It carries out the reaction heme b + (2E,6E)-farnesyl diphosphate + H2O = Fe(II)-heme o + diphosphate. It functions in the pathway porphyrin-containing compound metabolism; heme O biosynthesis; heme O from protoheme: step 1/1. Converts heme B (protoheme IX) to heme O by substitution of the vinyl group on carbon 2 of heme B porphyrin ring with a hydroxyethyl farnesyl side group. The chain is Protoheme IX farnesyltransferase from Methylorubrum extorquens (strain CM4 / NCIMB 13688) (Methylobacterium extorquens).